The chain runs to 178 residues: MSRIGKQPIAIPSGVDVSVANSVLKFKKGNNTKELDTKGHVDVKVENGHIVFSPKGDDRQSRAYWGTYRALANNIVTGLTSGFTRQLEINGVGYKAAAKGKILELTLGFSHLINYELPSGVEASVDKNIITIKGDDKQVVGQVAAQVRGFRPPEPYKGKGVKYVEERIIRKAGKTSKK.

The protein belongs to the universal ribosomal protein uL6 family. As to quaternary structure, part of the 50S ribosomal subunit.

In terms of biological role, this protein binds to the 23S rRNA, and is important in its secondary structure. It is located near the subunit interface in the base of the L7/L12 stalk, and near the tRNA binding site of the peptidyltransferase center. The sequence is that of Large ribosomal subunit protein uL6 from Campylobacter curvus (strain 525.92).